Here is a 141-residue protein sequence, read N- to C-terminus: MLQCNKKAENGAMSWLDEVKWDAQGLVPVIAQEAATGDVLMFAWMNREALAKTAELGRAVYFSRSRGRLWFKGEESGHVQTVHEIRLDCDNDVVLLKVTQLGHEPGIACHTGRHSCFFSVLKDGAWQAVDPVLKDPESIYK.

Position 88 (Asp-88) interacts with Mg(2+). Residue Cys-89 coordinates Zn(2+). Residues Asp-90 and Asp-92 each contribute to the Mg(2+) site. 2 residues coordinate Zn(2+): Cys-109 and Cys-116.

The protein belongs to the PRA-CH family. In terms of assembly, homodimer. Mg(2+) is required as a cofactor. Requires Zn(2+) as cofactor.

The protein localises to the cytoplasm. It catalyses the reaction 1-(5-phospho-beta-D-ribosyl)-5'-AMP + H2O = 1-(5-phospho-beta-D-ribosyl)-5-[(5-phospho-beta-D-ribosylamino)methylideneamino]imidazole-4-carboxamide. It functions in the pathway amino-acid biosynthesis; L-histidine biosynthesis; L-histidine from 5-phospho-alpha-D-ribose 1-diphosphate: step 3/9. Its function is as follows. Catalyzes the hydrolysis of the adenine ring of phosphoribosyl-AMP. The polypeptide is Phosphoribosyl-AMP cyclohydrolase (Paracidovorax citrulli (strain AAC00-1) (Acidovorax citrulli)).